The sequence spans 405 residues: Acetate kinase (405 aa).

N7 serves as a coordination point for Mg(2+). K14 lines the ATP pocket. A substrate-binding site is contributed by R90. D147 (proton donor/acceptor) is an active-site residue. Residues 207–211 (HLGNG), 282–284 (DMR), and 330–334 (GVGEN) contribute to the ATP site. E383 serves as a coordination point for Mg(2+).

Belongs to the acetokinase family. In terms of assembly, homodimer. Mg(2+) is required as a cofactor. The cofactor is Mn(2+).

The protein resides in the cytoplasm. The catalysed reaction is acetate + ATP = acetyl phosphate + ADP. It functions in the pathway metabolic intermediate biosynthesis; acetyl-CoA biosynthesis; acetyl-CoA from acetate: step 1/2. Functionally, catalyzes the formation of acetyl phosphate from acetate and ATP. Can also catalyze the reverse reaction. The protein is Acetate kinase of Pseudothermotoga lettingae (strain ATCC BAA-301 / DSM 14385 / NBRC 107922 / TMO) (Thermotoga lettingae).